We begin with the raw amino-acid sequence, 259 residues long: MLIDWFTVSAQAINFLILVALLKRFLYGPVLRAMDRREERLASCFAEAENKRLEAQQLEENYRSLLQELEEARGVKLRQVEEEIEDQRHKLLAAARQEAAEIQSAWAASIRDERSSFFTELKKRVGSEMLNIARKSLGDLANIELEQLMVERFNERLAQLDRNEQQQVALAASERGVLVRSPFTLPPELRDRLTQGVRQALGEEIDMQYQDRADMPLGIELTVGGLKLSWGVDSYFEQLERDVATLYDAQAATVSEGSP.

Residues 5–27 (WFTVSAQAINFLILVALLKRFLY) form a helical membrane-spanning segment.

Belongs to the ATPase B chain family. As to quaternary structure, F-type ATPases have 2 components, F(1) - the catalytic core - and F(0) - the membrane proton channel. F(1) has five subunits: alpha(3), beta(3), gamma(1), delta(1), epsilon(1). F(0) has three main subunits: a(1), b(2) and c(10-14). The alpha and beta chains form an alternating ring which encloses part of the gamma chain. F(1) is attached to F(0) by a central stalk formed by the gamma and epsilon chains, while a peripheral stalk is formed by the delta and b chains.

It localises to the cell inner membrane. In terms of biological role, f(1)F(0) ATP synthase produces ATP from ADP in the presence of a proton or sodium gradient. F-type ATPases consist of two structural domains, F(1) containing the extramembraneous catalytic core and F(0) containing the membrane proton channel, linked together by a central stalk and a peripheral stalk. During catalysis, ATP synthesis in the catalytic domain of F(1) is coupled via a rotary mechanism of the central stalk subunits to proton translocation. Its function is as follows. Component of the F(0) channel, it forms part of the peripheral stalk, linking F(1) to F(0). The chain is ATP synthase subunit b 2 from Syntrophotalea carbinolica (strain DSM 2380 / NBRC 103641 / GraBd1) (Pelobacter carbinolicus).